The following is an 880-amino-acid chain: Alanine--tRNA ligase (880 aa).

Zn(2+) is bound by residues His566, His570, Cys668, and His672.

It belongs to the class-II aminoacyl-tRNA synthetase family. Requires Zn(2+) as cofactor.

The protein resides in the cytoplasm. The enzyme catalyses tRNA(Ala) + L-alanine + ATP = L-alanyl-tRNA(Ala) + AMP + diphosphate. In terms of biological role, catalyzes the attachment of alanine to tRNA(Ala) in a two-step reaction: alanine is first activated by ATP to form Ala-AMP and then transferred to the acceptor end of tRNA(Ala). Also edits incorrectly charged Ser-tRNA(Ala) and Gly-tRNA(Ala) via its editing domain. The sequence is that of Alanine--tRNA ligase from Nostoc sp. (strain PCC 7120 / SAG 25.82 / UTEX 2576).